Consider the following 429-residue polypeptide: MMVDTGVDHRAVSSHDGPDAGRRVFGAADPRFACVVRAFASMFPGRRFGGGALAVYLDGQPVVDVWKGWADRAGWVPWSADSAPMVFSATKGMTATVIHRLADRGLIDYEAPVAEYWPAFGANGKATLTVRDVMRHQAGLSGLRGATQQDLLDHVVMEERLAAAVPGRLLGKSAYHALTFGWLMSGLARAVTGKDMRLLFREELAEPLDTDGLHLGRPPADAPTRVAEIIMPQDIAANAVLTCAMRRLAHRFSGGFRSMYFPGAIAAVQGEAPLLDAEIPAANGVATARALARMYGAIANGGEIDGIRFLSRELVTGLTRNRRQVLPDRNLLVPLNFHLGYHGMPIGNVMPGFGHVGLGGSIGWTDPETGVAFALVHNRLLSPLVMTDHAGFVGIYHLIRQAAAQARKRGYQPVTPFGAPYSEPGAAAG.

Ser-88 (acyl-ester intermediate) is an active-site residue.

Belongs to the beta-lactamase family.

It is found in the secreted. The protein resides in the cell wall. Its subcellular location is the cell membrane. The enzyme catalyses a fatty acid ester + H2O = an aliphatic alcohol + a fatty acid + H(+). The catalysed reaction is an acetyl ester + H2O = an aliphatic alcohol + acetate + H(+). It carries out the reaction a butanoate ester + H2O = an aliphatic alcohol + butanoate + H(+). It catalyses the reaction an octanoate ester + H2O = an aliphatic alcohol + octanoate + H(+). The enzyme catalyses decanoate ester + H2O = decanoate + an aliphatic alcohol + H(+). The catalysed reaction is a dodecanoate ester + H2O = an aliphatic alcohol + dodecanoate + H(+). It carries out the reaction a tetradecanoate ester + H2O = an aliphatic alcohol + tetradecanoate + H(+). It catalyses the reaction hexadecanoate ester + H2O = an aliphatic alcohol + hexadecanoate + H(+). The enzyme catalyses octadecanoate ester + H2O = an aliphatic alcohol + octadecanoate + H(+). The catalysed reaction is a hexanoate ester + H2O = an aliphatic alcohol + hexanoate + H(+). It carries out the reaction a beta-lactam + H2O = a substituted beta-amino acid. With respect to regulation, esterase and beta-lactamase activities are inhibited by the active site residue modifiers phenylmethanesulfonylflouride (PMSF) and diethylpyrocarbonate (DEPC). Functionally, shows both esterase and beta-lactamase activities, with a much higher activity against phenyl esters than against beta-lactams. Shows esterase activity against both long-chain and short-chain p-nitrophenol (pNP) esters, with a preference for shorter chain esters. Hydrolyzes substrates containing beta-lactam ring such as nitrocefin and ampicillin. Functions as an immunogen that activates both humoral and cell-mediated responses. The polypeptide is Esterase/beta-lactamase LipL (Mycobacterium tuberculosis (strain ATCC 25618 / H37Rv)).